The primary structure comprises 270 residues: Probable feruloyl esterase C (270 aa).

The N-terminal stretch at 1–21 (MIKSIILQAIMVLSTLTSVHG) is a signal peptide. N-linked (GlcNAc...) asparagine glycosylation occurs at Asn-23.

This sequence belongs to the faeC family.

The protein resides in the secreted. The enzyme catalyses feruloyl-polysaccharide + H2O = ferulate + polysaccharide.. Its function is as follows. Involved in degradation of plant cell walls. Hydrolyzes the feruloyl-arabinose ester bond in arabinoxylans, and the feruloyl-galactose ester bond in pectin. Active against paranitrophenyl-acetate, methyl ferulate and wheat arabinoxylan. In Aspergillus flavus (strain ATCC 200026 / FGSC A1120 / IAM 13836 / NRRL 3357 / JCM 12722 / SRRC 167), this protein is Probable feruloyl esterase C (faeC).